A 323-amino-acid polypeptide reads, in one-letter code: Muscleblind-like protein 3 (323 aa).

C3H1-type zinc fingers lie at residues 13–41 (WLTL…HPSR), 47–73 (NGRV…HPPP), 177–205 (TDKL…HPLE), and 213–239 (ENSV…HPPA).

It belongs to the muscleblind family. Expressed in fast and slow myotomal muscle, heart, liver, skin, brain and testis.

It is found in the nucleus. Its subcellular location is the cytoplasm. Functionally, involved in pre-mRNA alternative splicing regulation. Could inhibit terminal muscle differentiation, acting at approximately the time of myogenin induction. The sequence is that of Muscleblind-like protein 3 (mbnl3) from Takifugu rubripes (Japanese pufferfish).